Consider the following 1578-residue polypeptide: Cilia- and flagella-associated protein 74 (1578 aa).

Residues 1–14 (MEEPTVQFSDEDLV) are compositionally biased toward acidic residues. Disordered stretches follow at residues 1–21 (MEEP…PPMD) and 33–67 (EVER…TTKD). Basic and acidic residues predominate over residues 33–65 (EVERPSEGLEDEGSHSSAKKESKGAEKMRKSTT). 2 coiled-coil regions span residues 103-156 (RQRM…QSKI) and 330-378 (KYLF…RRQH).

It belongs to the CFAP74 family.

Its subcellular location is the cytoplasm. It localises to the cytoskeleton. It is found in the cilium axoneme. The protein resides in the flagellum axoneme. Its function is as follows. As part of the central apparatus of the cilium axoneme may play a role in cilium movement. May play an important role in sperm architecture and function. This chain is Cilia- and flagella-associated protein 74, found in Mus musculus (Mouse).